A 134-amino-acid chain; its full sequence is Putative F-box protein R638 (134 aa).

Residues 5–52 (NIMNLLNEDCILHILSFLADKDKIQLSLSCKSNLKFLHKTIYDDIYFY) form the F-box domain.

In Acanthamoeba polyphaga mimivirus (APMV), this protein is Putative F-box protein R638.